The primary structure comprises 302 residues: Sulfate adenylyltransferase subunit 2 (302 aa).

A disordered region spans residues 280 to 302; it reads RQGRLIDSDQSASMEQKKRQGYF.

Belongs to the PAPS reductase family. CysD subfamily. In terms of assembly, heterodimer composed of CysD, the smaller subunit, and CysN.

It catalyses the reaction sulfate + ATP + H(+) = adenosine 5'-phosphosulfate + diphosphate. The protein operates within sulfur metabolism; hydrogen sulfide biosynthesis; sulfite from sulfate: step 1/3. Its function is as follows. With CysN forms the ATP sulfurylase (ATPS) that catalyzes the adenylation of sulfate producing adenosine 5'-phosphosulfate (APS) and diphosphate, the first enzymatic step in sulfur assimilation pathway. APS synthesis involves the formation of a high-energy phosphoric-sulfuric acid anhydride bond driven by GTP hydrolysis by CysN coupled to ATP hydrolysis by CysD. This Shewanella sp. (strain ANA-3) protein is Sulfate adenylyltransferase subunit 2.